We begin with the raw amino-acid sequence, 571 residues long: Putative pyruvate decarboxylase C13A11.06 (571 aa).

Pyruvate-binding residues include D29 and H118. Thiamine diphosphate contacts are provided by residues T395 and 418–420 (GSI). D450 is a binding site for Mg(2+). Thiamine diphosphate is bound by residues 451–452 (GS) and 477–482 (NDGYTI). Mg(2+) contacts are provided by N477 and G479. A pyruvate-binding site is contributed by E483.

Belongs to the TPP enzyme family. Homotetramer. Mg(2+) is required as a cofactor. Thiamine diphosphate serves as cofactor.

The catalysed reaction is a 2-oxocarboxylate + H(+) = an aldehyde + CO2. The enzyme catalyses pyruvate + H(+) = acetaldehyde + CO2. This Schizosaccharomyces pombe (strain 972 / ATCC 24843) (Fission yeast) protein is Putative pyruvate decarboxylase C13A11.06.